The following is a 487-amino-acid chain: NADH-quinone oxidoreductase subunit N (487 aa).

13 consecutive transmembrane segments (helical) span residues 18 to 38, 44 to 64, 84 to 104, 116 to 136, 169 to 189, 211 to 231, 242 to 262, 277 to 297, 305 to 325, 333 to 353, 377 to 397, 410 to 430, and 457 to 477; these read LVPE…DLFV, VWTH…LATG, VMKT…WTYL, VLVL…SLLM, FVLG…VYGA, LLTG…AAPF, APAP…FGMA, WHLL…LMAI, MLAY…AGGG, MFYA…IIAL, AGLV…LGFW, DMLW…YYYL, and VLGV…PIMV.

Belongs to the complex I subunit 2 family. As to quaternary structure, NDH-1 is composed of 14 different subunits. Subunits NuoA, H, J, K, L, M, N constitute the membrane sector of the complex.

The protein resides in the cell inner membrane. The enzyme catalyses a quinone + NADH + 5 H(+)(in) = a quinol + NAD(+) + 4 H(+)(out). Its function is as follows. NDH-1 shuttles electrons from NADH, via FMN and iron-sulfur (Fe-S) centers, to quinones in the respiratory chain. The immediate electron acceptor for the enzyme in this species is believed to be ubiquinone. Couples the redox reaction to proton translocation (for every two electrons transferred, four hydrogen ions are translocated across the cytoplasmic membrane), and thus conserves the redox energy in a proton gradient. The sequence is that of NADH-quinone oxidoreductase subunit N from Xanthomonas euvesicatoria pv. vesicatoria (strain 85-10) (Xanthomonas campestris pv. vesicatoria).